We begin with the raw amino-acid sequence, 230 residues long: MTKKAIILLSGGLDSATTAAIALAAGYQLIALSFRYGQRHERELAAAKKIANFLNIKEHHLIEVNLSLWGGSALTDQSIAIPQEGINPDIIPITYVPGRNTVFISIALSLAEAREAEAIYLGINAVDYSGYPDCRPEYLDAFQTLANLSSKAGLEGKAPQLIAPLVMDSKVDIVRRAVSLGVPIADTWSCYQGEVEPCGLCDSCRIRDQALIEAGYPELATPLLKNSRGK.

Residue 9-19 coordinates ATP; sequence LSGGLDSATTA. Residues C190, C198, C201, and C204 each coordinate Zn(2+).

It belongs to the QueC family. Zn(2+) is required as a cofactor.

It carries out the reaction 7-carboxy-7-deazaguanine + NH4(+) + ATP = 7-cyano-7-deazaguanine + ADP + phosphate + H2O + H(+). Its pathway is purine metabolism; 7-cyano-7-deazaguanine biosynthesis. Catalyzes the ATP-dependent conversion of 7-carboxy-7-deazaguanine (CDG) to 7-cyano-7-deazaguanine (preQ(0)). The polypeptide is 7-cyano-7-deazaguanine synthase (Microcystis aeruginosa (strain NIES-843 / IAM M-2473)).